The primary structure comprises 143 residues: Large ribosomal subunit protein uL11 (143 aa).

This sequence belongs to the universal ribosomal protein uL11 family. Part of the ribosomal stalk of the 50S ribosomal subunit. Interacts with L10 and the large rRNA to form the base of the stalk. L10 forms an elongated spine to which L12 dimers bind in a sequential fashion forming a multimeric L10(L12)X complex. One or more lysine residues are methylated.

Functionally, forms part of the ribosomal stalk which helps the ribosome interact with GTP-bound translation factors. This is Large ribosomal subunit protein uL11 from Clavibacter michiganensis subsp. michiganensis (strain NCPPB 382).